A 98-amino-acid polypeptide reads, in one-letter code: Citrate lyase acyl carrier protein (98 aa).

The residue at position 14 (Ser14) is an O-(phosphoribosyl dephospho-coenzyme A)serine.

The protein belongs to the CitD family. As to quaternary structure, oligomer with a subunit composition of (alpha,beta,gamma)6.

The protein resides in the cytoplasm. Functionally, covalent carrier of the coenzyme of citrate lyase. This is Citrate lyase acyl carrier protein from Escherichia coli O81 (strain ED1a).